Reading from the N-terminus, the 1390-residue chain is DNA-directed RNA polymerase subunit beta'' (1390 aa).

Residues Cys-224, Cys-295, Cys-302, and Cys-305 each coordinate Zn(2+).

It belongs to the RNA polymerase beta' chain family. RpoC2 subfamily. In plastids the minimal PEP RNA polymerase catalytic core is composed of four subunits: alpha, beta, beta', and beta''. When a (nuclear-encoded) sigma factor is associated with the core the holoenzyme is formed, which can initiate transcription. It depends on Zn(2+) as a cofactor.

The protein resides in the plastid. It localises to the chloroplast. The enzyme catalyses RNA(n) + a ribonucleoside 5'-triphosphate = RNA(n+1) + diphosphate. Its function is as follows. DNA-dependent RNA polymerase catalyzes the transcription of DNA into RNA using the four ribonucleoside triphosphates as substrates. The sequence is that of DNA-directed RNA polymerase subunit beta'' from Daucus carota (Wild carrot).